A 449-amino-acid polypeptide reads, in one-letter code: Alginate biosynthesis transcriptional regulatory protein AlgB (449 aa).

Residues 10 to 124 enclose the Response regulatory domain; that stretch reads RILLVDDESA…QLRLAAAKQL (115 aa). Aspartate 59 is modified (4-aspartylphosphate). The region spanning 147–376 is the Sigma-54 factor interaction domain; it reads LESHSPAMAA…LRNVIERASI (230 aa). Residues 175 to 182 and 238 to 247 contribute to the ATP site; these read GESGSGKG and ADGGTLFLDE. A DNA-binding region (H-T-H motif) is located at residues 426–445; sequence LDQAAKTLGIDASTLYRKRK.

Phosphorylated by KinB.

It participates in glycan biosynthesis; alginate biosynthesis [regulation]. Member of the two-component regulatory system AlgB/KinB involved in regulation of alginate biosynthesis genes. Positive regulator of the alginate biosynthetic gene AlgD. This Pseudomonas aeruginosa (strain ATCC 15692 / DSM 22644 / CIP 104116 / JCM 14847 / LMG 12228 / 1C / PRS 101 / PAO1) protein is Alginate biosynthesis transcriptional regulatory protein AlgB (algB).